Reading from the N-terminus, the 1256-residue chain is Bifunctional autolysin (1256 aa).

A signal peptide spans 1-29; sequence MAKKFNYKLPSMVALTLVGSAVTAHQVQA. Polar residues predominate over residues 103–138; that stretch reads GDTRANQSATTNNTQPVAKSTSTTAPKTNTNVTNAG. Disordered regions lie at residues 103–151, 172–219, and 419–440; these read GDTR…NSEN, KTAA…KYKP, and TQSTTTPTTPSKPTTPSKPSTG. 2 stretches are compositionally biased toward low complexity: residues 172-196 and 421-439; these read KTAAPKAATTSAPKAKTEATPKVTT and STTTPTTPSKPTTPSKPST. The tract at residues 199–775 is N-acetylmuramoyl-L-alanine amidase; sequence ASAQPRSVAA…AVAQPKTAVK (577 aa). GW domains follow at residues 443-517, 519-593, 612-686, 688-762, 784-859, 861-936, and 943-1017; these read TVAA…YNTA, SPVN…DTAK, TVSS…YNNA, SPVN…VPAA, TTQT…VQNL, KEVK…APTA, and AAKD…KELI. The endo-beta-N-acetylglucosaminidase stretch occupies residues 776–1256; sequence AYTVTKPQTT…GKYFDIPQYK (481 aa).

It in the N-terminal section; belongs to the N-acetylmuramoyl-L-alanine amidase 2 family. The protein in the C-terminal section; belongs to the glycosyl hydrolase 73 family. As to quaternary structure, oligomer; forms a ring structure at the cell surface which is important for efficient partitioning of daughter cells after cell division. In terms of processing, undergoes proteolytic processing to generate the two extracellular lytic enzymes, probably at the septal region on the cell surface.

The protein localises to the secreted. It catalyses the reaction Hydrolyzes the link between N-acetylmuramoyl residues and L-amino acid residues in certain cell-wall glycopeptides.. The enzyme catalyses an N(4)-(oligosaccharide-(1-&gt;3)-[oligosaccharide-(1-&gt;6)]-beta-D-Man-(1-&gt;4)-beta-D-GlcNAc-(1-&gt;4)-alpha-D-GlcNAc)-L-asparaginyl-[protein] + H2O = an oligosaccharide-(1-&gt;3)-[oligosaccharide-(1-&gt;6)]-beta-D-Man-(1-&gt;4)-D-GlcNAc + N(4)-(N-acetyl-beta-D-glucosaminyl)-L-asparaginyl-[protein]. Its function is as follows. Endohydrolysis of the di-N-acetylchitobiosyl unit in high-mannose glycopeptides and glycoproteins containing the -[(Man)5(GlcNAc)2]-Asn structure. One N-acetyl-D-glucosamine residue remains attached to the protein; the rest of the oligosaccharide is released intact. Cleaves the peptidoglycan connecting the daughter cells at the end of the cell division cycle, resulting in the separation of the two newly divided cells. Acts as an autolysin in penicillin-induced lysis. The chain is Bifunctional autolysin (atl) from Staphylococcus aureus (strain COL).